Consider the following 99-residue polypeptide: Putative UPF0320 protein YDR543C (99 aa).

Positions E80 to T99 are disordered.

It belongs to the UPF0320 family.

The sequence is that of Putative UPF0320 protein YDR543C from Saccharomyces cerevisiae (strain ATCC 204508 / S288c) (Baker's yeast).